The following is a 398-amino-acid chain: Ribosomal RNA large subunit methyltransferase F (398 aa).

A compositionally biased stretch (basic residues) spans 1 to 12 (MTPSRKPARPGA). The tract at residues 1–85 (MTPSRKPARP…RNLHGQGYDF (85 aa)) is disordered. Composition is skewed to low complexity over residues 20–40 (PSAK…AQPK) and 48–59 (QAKSQAKPQAKS).

The protein belongs to the methyltransferase superfamily. METTL16/RlmF family.

It localises to the cytoplasm. The enzyme catalyses adenosine(1618) in 23S rRNA + S-adenosyl-L-methionine = N(6)-methyladenosine(1618) in 23S rRNA + S-adenosyl-L-homocysteine + H(+). Its function is as follows. Specifically methylates the adenine in position 1618 of 23S rRNA. In Shewanella loihica (strain ATCC BAA-1088 / PV-4), this protein is Ribosomal RNA large subunit methyltransferase F.